Here is a 352-residue protein sequence, read N- to C-terminus: Phenylalanine--tRNA ligase alpha subunit (352 aa).

Glu258 provides a ligand contact to Mg(2+).

Belongs to the class-II aminoacyl-tRNA synthetase family. Phe-tRNA synthetase alpha subunit type 1 subfamily. As to quaternary structure, tetramer of two alpha and two beta subunits. Mg(2+) is required as a cofactor.

The protein localises to the cytoplasm. It catalyses the reaction tRNA(Phe) + L-phenylalanine + ATP = L-phenylalanyl-tRNA(Phe) + AMP + diphosphate + H(+). This chain is Phenylalanine--tRNA ligase alpha subunit, found in Staphylococcus aureus (strain NCTC 8325 / PS 47).